Here is a 194-residue protein sequence, read N- to C-terminus: Lysozyme g (194 aa).

Catalysis depends on residues glutamate 71 and aspartate 84.

It belongs to the glycosyl hydrolase 23 family. As to expression, expressed in intestine, liver, spleen, anterior kidney, posterior kidney, heart, gill, muscle and leukocytes.

The catalysed reaction is Hydrolysis of (1-&gt;4)-beta-linkages between N-acetylmuramic acid and N-acetyl-D-glucosamine residues in a peptidoglycan and between N-acetyl-D-glucosamine residues in chitodextrins.. Has lytic activity against M.lysodeikticus, V.alginolyticus from Epinephelus fario, V.vulnificus from culture water, A.hydrophila from soft-shell turtle, A.hydrophila from goldfish and V.parahaemolyticus, P.fluorescens and V.fluvialis from culture water. The protein is Lysozyme g of Epinephelus coioides (Orange-spotted grouper).